The following is a 188-amino-acid chain: Peptide deformylase (188 aa).

Cys94 and His136 together coordinate Fe cation. Residue Glu137 is part of the active site. Residue His140 coordinates Fe cation.

This sequence belongs to the polypeptide deformylase family. Fe(2+) serves as cofactor.

It carries out the reaction N-terminal N-formyl-L-methionyl-[peptide] + H2O = N-terminal L-methionyl-[peptide] + formate. Removes the formyl group from the N-terminal Met of newly synthesized proteins. Requires at least a dipeptide for an efficient rate of reaction. N-terminal L-methionine is a prerequisite for activity but the enzyme has broad specificity at other positions. The chain is Peptide deformylase from Chlorobium phaeobacteroides (strain DSM 266 / SMG 266 / 2430).